A 143-amino-acid polypeptide reads, in one-letter code: Nucleoside diphosphate kinase (143 aa).

Residues lysine 11, phenylalanine 59, arginine 87, threonine 93, arginine 104, and asparagine 114 each coordinate ATP. The Pros-phosphohistidine intermediate role is filled by histidine 117.

The protein belongs to the NDK family. In terms of assembly, homotetramer. Requires Mg(2+) as cofactor.

It localises to the cytoplasm. The enzyme catalyses a 2'-deoxyribonucleoside 5'-diphosphate + ATP = a 2'-deoxyribonucleoside 5'-triphosphate + ADP. It carries out the reaction a ribonucleoside 5'-diphosphate + ATP = a ribonucleoside 5'-triphosphate + ADP. Its function is as follows. Major role in the synthesis of nucleoside triphosphates other than ATP. The ATP gamma phosphate is transferred to the NDP beta phosphate via a ping-pong mechanism, using a phosphorylated active-site intermediate. In Shigella boydii serotype 4 (strain Sb227), this protein is Nucleoside diphosphate kinase.